The sequence spans 672 residues: Cytadherence high molecular weight protein 3 (672 aa).

25 repeat units span residues Y98–Q100, Y106–Q108, P160–V162, Y197–Q199, Y206–Q208, Y211–Q213, Y221–Q223, Y226–Q228, Y235–Q237, Y249–Q251, P288–V290, V310–E319, P312–T315, P316–V318, P322–V324, V330–E339, P332–T335, P336–V338, P354–P358, P385–P389, P396–P400, P402–V404, P413–V415, P424–P428, and P454–V456. A 9 X 3 AA repeats OF Y-D-Q region spans residues Y98–Q251. Positions P160–V456 are 8 X 3 AA repeats of P-V-V. Residues G177–Y197 form a disordered region. Residues V310–E339 are 2 X 10 AA repeats of V-E-P-T-P-T-P-V-V-E. The interval P312–P428 is 6 X 5 AA repeats of P-X-P-X-P.

It is found in the cell projection. Its subcellular location is the attachment organelle membrane. In terms of biological role, component of the cytoskeleton-like structure which stabilizes the shape of the wall-less mycoplasma. This cytoskeleton-like network of accessory proteins containing HMW proteins 1 to 5 allows the proper anchoring of cytadhesin proteins in the mycoplasmal membrane at the attachment organelle. Essential for successful surface parasitism. The sequence is that of Cytadherence high molecular weight protein 3 (hmw3) from Mycoplasma pneumoniae (strain ATCC 29342 / M129 / Subtype 1) (Mycoplasmoides pneumoniae).